Reading from the N-terminus, the 299-residue chain is Protein bem46 (299 aa).

A helical transmembrane segment spans residues 15 to 32; it reads YSGMASLAVTLIALGFLY.

The protein belongs to the serine esterase family.

It localises to the membrane. Functionally, suppressor of bem1/bud5. The polypeptide is Protein bem46 (bem46) (Schizosaccharomyces pombe (strain 972 / ATCC 24843) (Fission yeast)).